The primary structure comprises 655 residues: p-hydroxybenzoic acid efflux pump subunit AaeB (655 aa).

The Periplasmic segment spans residues 1–12 (MGIFSIANQHIR). Residues 13-33 (FAVKLACAIVLALFIGFHFQL) form a helical membrane-spanning segment. The Cytoplasmic segment spans residues 34–37 (ETPR). Residues 38 to 58 (WAVLTAAIVAAGPAFAAGGEP) traverse the membrane as a helical segment. At 59 to 68 (YSGAIRYRGM) the chain is on the periplasmic side. The chain crosses the membrane as a helical span at residues 69-89 (LRIIGTFIGCIAALIIIISMI). Over 90 to 92 (RAP) the chain is Cytoplasmic. The helical transmembrane segment at 93–113 (LLMILVCCVWAGFCTWISSLV) threads the bilayer. The Periplasmic segment spans residues 114–120 (RIENSYA). Residues 121 to 141 (WGLSGYTALIIVITIQTEPLL) traverse the membrane as a helical segment. At 142 to 151 (TPQFALERCS) the chain is on the cytoplasmic side. Residues 152-172 (EIVIGIGCAILADLLFSPRSI) traverse the membrane as a helical segment. Residues 173–369 (KQEVDRELDC…RTTLSCILGT (197 aa)) are Periplasmic-facing. The chain crosses the membrane as a helical span at residues 370–390 (LFWLWTGWTSGNGAMVMIAVV). Residues 391–406 (TSLAMRLPNPRMVCID) are Cytoplasmic-facing. The chain crosses the membrane as a helical span at residues 407–427 (FIYGTLAALPLGLLYFLVIIP). Residues 428–430 (NTQ) lie on the Periplasmic side of the membrane. The helical transmembrane segment at 431 to 451 (QSMLLLCLSLAVLGFFIGIEV) threads the bilayer. Residues 452–459 (QKRRLGSM) lie on the Cytoplasmic side of the membrane. The chain crosses the membrane as a helical span at residues 460–480 (GALASTINIIVLDNPMTFHFI). Position 481 (glutamine 481) is a topological domain, periplasmic. Residues 482–502 (FLDSALGQIVGCMLAFIVILL) traverse the membrane as a helical segment. Residues 503 to 655 (VRDKSKDRTG…HKYQNALTDS (153 aa)) lie on the Cytoplasmic side of the membrane.

The protein belongs to the aromatic acid exporter ArAE (TC 2.A.85) family.

The protein localises to the cell inner membrane. Functionally, forms an efflux pump with AaeA. Could function as a metabolic relief valve, allowing to eliminate certain compounds when they accumulate to high levels in the cell. This Salmonella typhi protein is p-hydroxybenzoic acid efflux pump subunit AaeB.